The chain runs to 226 residues: Ribosomal RNA small subunit methyltransferase Nep1 (226 aa).

S-adenosyl-L-methionine is bound by residues glycine 176, glycine 181, and 197–202 (IYEESL).

The protein belongs to the class IV-like SAM-binding methyltransferase superfamily. RNA methyltransferase NEP1 family. In terms of assembly, homodimer.

It catalyses the reaction a pseudouridine in rRNA + S-adenosyl-L-methionine = an N(1)-methylpseudouridine in rRNA + S-adenosyl-L-homocysteine + H(+). Its function is as follows. Methyltransferase involved in ribosomal biogenesis. Specifically catalyzes the N1-methylation of the pseudouridine corresponding to position 914 in M.jannaschii 16S rRNA. The protein is Ribosomal RNA small subunit methyltransferase Nep1 of Methanothrix thermoacetophila (strain DSM 6194 / JCM 14653 / NBRC 101360 / PT) (Methanosaeta thermophila).